The sequence spans 208 residues: Dephospho-CoA kinase (208 aa).

One can recognise a DPCK domain in the interval 8-208; it reads LVGVTGGIGS…VYQSLLTVVE (201 aa). ATP is bound at residue 16–21; that stretch reads GSGKST.

It belongs to the CoaE family.

The protein resides in the cytoplasm. It carries out the reaction 3'-dephospho-CoA + ATP = ADP + CoA + H(+). It participates in cofactor biosynthesis; coenzyme A biosynthesis; CoA from (R)-pantothenate: step 5/5. Catalyzes the phosphorylation of the 3'-hydroxyl group of dephosphocoenzyme A to form coenzyme A. The polypeptide is Dephospho-CoA kinase (Chlorobaculum tepidum (strain ATCC 49652 / DSM 12025 / NBRC 103806 / TLS) (Chlorobium tepidum)).